A 295-amino-acid chain; its full sequence is Phosphatidylserine decarboxylase proenzyme (295 aa).

Catalysis depends on charge relay system; for autoendoproteolytic cleavage activity residues Asp90 and Ser258. The active-site Schiff-base intermediate with substrate; via pyruvic acid; for decarboxylase activity is the Ser258. Ser258 carries the post-translational modification Pyruvic acid (Ser); by autocatalysis.

This sequence belongs to the phosphatidylserine decarboxylase family. PSD-B subfamily. Prokaryotic type I sub-subfamily. In terms of assembly, heterodimer of a large membrane-associated beta subunit and a small pyruvoyl-containing alpha subunit. Pyruvate is required as a cofactor. Post-translationally, is synthesized initially as an inactive proenzyme. Formation of the active enzyme involves a self-maturation process in which the active site pyruvoyl group is generated from an internal serine residue via an autocatalytic post-translational modification. Two non-identical subunits are generated from the proenzyme in this reaction, and the pyruvate is formed at the N-terminus of the alpha chain, which is derived from the carboxyl end of the proenzyme. The autoendoproteolytic cleavage occurs by a canonical serine protease mechanism, in which the side chain hydroxyl group of the serine supplies its oxygen atom to form the C-terminus of the beta chain, while the remainder of the serine residue undergoes an oxidative deamination to produce ammonia and the pyruvoyl prosthetic group on the alpha chain. During this reaction, the Ser that is part of the protease active site of the proenzyme becomes the pyruvoyl prosthetic group, which constitutes an essential element of the active site of the mature decarboxylase.

The protein resides in the cell membrane. The enzyme catalyses a 1,2-diacyl-sn-glycero-3-phospho-L-serine + H(+) = a 1,2-diacyl-sn-glycero-3-phosphoethanolamine + CO2. It participates in phospholipid metabolism; phosphatidylethanolamine biosynthesis; phosphatidylethanolamine from CDP-diacylglycerol: step 2/2. Catalyzes the formation of phosphatidylethanolamine (PtdEtn) from phosphatidylserine (PtdSer). The sequence is that of Phosphatidylserine decarboxylase proenzyme from Blochmanniella pennsylvanica (strain BPEN).